The sequence spans 559 residues: Fanconi-associated nuclease 1 homolog (559 aa).

Glu-386, Asp-507, Glu-522, and Val-523 together coordinate Mn(2+). The VRR-NUC domain occupies 443–555 (DGSYRDAIRC…MPVAVCYVRW (113 aa)).

It belongs to the FAN1 family. The cofactor is Mn(2+). It depends on Mg(2+) as a cofactor.

The catalysed reaction is Hydrolytically removes 5'-nucleotides successively from the 3'-hydroxy termini of 3'-hydroxy-terminated oligonucleotides.. Functionally, nuclease required for the repair of DNA interstrand cross-links (ICL). Acts as a 5'-3' exonuclease that anchors at a cut end of DNA and cleaves DNA successively at every third nucleotide, allowing to excise an ICL from one strand through flanking incisions. Also has endonuclease activity toward 5'-flaps. The polypeptide is Fanconi-associated nuclease 1 homolog (Pseudomonas aeruginosa (strain ATCC 15692 / DSM 22644 / CIP 104116 / JCM 14847 / LMG 12228 / 1C / PRS 101 / PAO1)).